Here is an 823-residue protein sequence, read N- to C-terminus: Protein FAM83G (823 aa).

Ala-2 is modified (N-acetylalanine). The tract at residues 2–312 is DUF1669; that stretch reads AFSQVQCLDD…LYLMSHSVSL (311 aa). Ser-4 is subject to Phosphoserine. Positions 75–108 are disordered; that stretch reads DPGSEDPRGTGPSQGPEDNGVGDGEEASGADGVP. Residues Ser-124, Ser-127, and Ser-356 each carry the phosphoserine modification. Residues 450–823 form a disordered region; sequence RDTSQASAQH…AQAPRDRKDP (374 aa). The span at 452–465 shows a compositional bias: polar residues; it reads TSQASAQHQLWKQS. The span at 497–508 shows a compositional bias: pro residues; the sequence is DPEPLPPVPKPR. Residues 529–543 are compositionally biased toward basic and acidic residues; that stretch reads LPKEEAPQNGTDHRL. A compositionally biased stretch (acidic residues) spans 578-587; it reads GVEEEDDDDY. A phosphoserine mark is found at Ser-610, Ser-614, Ser-616, Ser-650, and Ser-666. 2 stretches are compositionally biased toward basic and acidic residues: residues 672–681 and 809–823; these read RGREEADALK and DSKR…RKDP.

It belongs to the FAM83 family. In terms of assembly, interacts with SMAD1 (via MH2 domain); in a SMAD4-independent manner. Directly interacts (via DUF1669) with casein kinase isoforms CSNK1A1 and CSNK1A1L. Phosphorylated in vitro by CSNK1A1. In terms of processing, BMP signaling induces the phosphorylation by BMPR1A at Ser-610, Ser-614 and Ser-616. Phosphorylation at Ser-610 is necessary for the activation of SMAD4-independent BMP target genes such as NEDD9 and ASNS.

Its subcellular location is the cytoplasm. It localises to the cytosol. The protein resides in the nucleus. Functionally, substrate for type I BMP receptor kinase involved in regulation of some target genes of the BMP signaling pathway. Also regulates the expression of several non-BMP target genes, suggesting a role in other signaling pathways. The sequence is that of Protein FAM83G (FAM83G) from Homo sapiens (Human).